Here is a 399-residue protein sequence, read N- to C-terminus: Odorant receptor 42b (399 aa).

The Cytoplasmic portion of the chain corresponds to 1-45 (MVFELIRPAPLTEQKRSRDGCIYLYRAMKFIGWLPPKQGVLRYVY). The helical transmembrane segment at 46–66 (LTWTLMTFVWCTTYLPLGFLG) threads the bilayer. Residues 67 to 83 (SYMTQIKSFSPGEFLTS) lie on the Extracellular side of the membrane. The chain crosses the membrane as a helical span at residues 84–104 (LQVCINAYGSSVKVAITYSML). The Cytoplasmic portion of the chain corresponds to 105–140 (WRLIKAKNILDQLDLRCTAMEEREKIHLVVARSNHA). Residues 141–161 (FLIFTFVYCGYAGSTYLSSVL) traverse the membrane as a helical segment. Over 162–178 (SGRPPWQLYNPFIDWHD) the chain is Extracellular. The helical transmembrane segment at 179–199 (GTLKLWVASTLEYMVMSGAVL) threads the bilayer. Over 200-268 (QDQLSDSYPL…AIIKPVIQGT (69 aa)) the chain is Cytoplasmic. Residues 269-289 (IFTQFLLIGLVLGFTLINVFF) traverse the membrane as a helical segment. Residues 290 to 292 (FSD) lie on the Extracellular side of the membrane. Residues 293–313 (IWTGIASFMFVITILLQTFPF) traverse the membrane as a helical segment. Residues 314-356 (CYTCNLIMEDCESLTHAIFQSNWVDASRRYKTTLLYFLQNVQQ) lie on the Cytoplasmic side of the membrane. The helical transmembrane segment at 357–377 (PIVFIAGGIFQISMSSNISVA) threads the bilayer. Over 378–399 (KFAFSVITITKQMNIADKFKTD) the chain is Extracellular.

It belongs to the insect chemoreceptor superfamily. Heteromeric odorant receptor channel (TC 1.A.69) family. Or2a subfamily. In terms of assembly, interacts with Orco. Complexes exist early in the endomembrane system in olfactory sensory neurons (OSNs), coupling these complexes to the conserved ciliary trafficking pathway. In terms of tissue distribution, expressed in olfactory sensory neurons in the antenna.

The protein resides in the cell membrane. Odorant receptor which mediates acceptance or avoidance behavior, depending on its substrates. The odorant receptor repertoire encodes a large collection of odor stimuli that vary widely in identity, intensity, and duration. May form a complex with Orco to form odorant-sensing units, providing sensitive and prolonged odorant signaling and calcium permeability. Involved in the behavioral responses to ethyl acetate and pentyl acetate. In Drosophila melanogaster (Fruit fly), this protein is Odorant receptor 42b (Or42b).